A 231-amino-acid polypeptide reads, in one-letter code: SrfA-induced gene F protein (231 aa).

The sequence is that of SrfA-induced gene F protein (sigF) from Dictyostelium discoideum (Social amoeba).